The following is a 306-amino-acid chain: Acetyl-coenzyme A carboxylase carboxyl transferase subunit beta (306 aa).

Residues 25 to 294 (LWIKDPTSGE…VVNPSNTSST (270 aa)) form the CoA carboxyltransferase N-terminal domain. Positions 287 to 296 (NPSNTSSTNS) are enriched in low complexity. Residues 287-306 (NPSNTSSTNSQASLSKAEAA) form a disordered region.

The protein belongs to the AccD/PCCB family. As to quaternary structure, acetyl-CoA carboxylase is a heterohexamer composed of biotin carboxyl carrier protein (AccB), biotin carboxylase (AccC) and two subunits each of ACCase subunit alpha (AccA) and ACCase subunit beta (AccD).

It localises to the cytoplasm. It carries out the reaction N(6)-carboxybiotinyl-L-lysyl-[protein] + acetyl-CoA = N(6)-biotinyl-L-lysyl-[protein] + malonyl-CoA. The protein operates within lipid metabolism; malonyl-CoA biosynthesis; malonyl-CoA from acetyl-CoA: step 1/1. Its function is as follows. Component of the acetyl coenzyme A carboxylase (ACC) complex. Biotin carboxylase (BC) catalyzes the carboxylation of biotin on its carrier protein (BCCP) and then the CO(2) group is transferred by the transcarboxylase to acetyl-CoA to form malonyl-CoA. The sequence is that of Acetyl-coenzyme A carboxylase carboxyl transferase subunit beta from Bartonella henselae (strain ATCC 49882 / DSM 28221 / CCUG 30454 / Houston 1) (Rochalimaea henselae).